The following is a 621-amino-acid chain: F-box/LRR-repeat protein 4 (621 aa).

Arg28 carries the post-translational modification Asymmetric dimethylarginine. The 56-residue stretch at 277–332 (NGYFDKLPYELIQLILNHLTLPDLCRLAQTCKLLNQHCCDPLQYIHLNLQPYWAKL) folds into the F-box domain. LRR repeat units lie at residues 376–397 (ELVR…EIIS), 402–421 (NLQD…AFSH), 427–448 (GLKR…SILN), 452–474 (DLQH…ASMI), 480–501 (KLRT…AELA), 504–524 (CPLL…STGC), 532–558 (LPNL…ASNC), 559–583 (TRLR…LLES), and 584–609 (CKDL…LSAS).

As to quaternary structure, part of a SCF (SKP1-CUL1-F-box) protein ligase complex. Interacts with FAF2 and VCP. Interacts with PPTC7; this interaction promotes destruction of BNIP3 and NIX and mitophagy suppression.

The protein localises to the cytoplasm. Its subcellular location is the nucleus. The protein resides in the mitochondrion outer membrane. Its function is as follows. Substrate-recognition component of the mitochondria-localized SCF-FBXL4 ubiquitin E3 ligase complex that plays a role in the restriction of mitophagy by controlling the degradation of BNIP3 and NIX mitophagy receptors. Also rescues mitochondrial injury through reverting hyperactivation of DRP1-mediated mitochondrial fission. The chain is F-box/LRR-repeat protein 4 (FBXL4) from Bos taurus (Bovine).